We begin with the raw amino-acid sequence, 394 residues long: Phosphopentomutase (394 aa).

Asp-13, Asp-286, His-291, Asp-327, His-328, and His-339 together coordinate Mn(2+).

Belongs to the phosphopentomutase family. Mn(2+) is required as a cofactor.

Its subcellular location is the cytoplasm. The enzyme catalyses 2-deoxy-alpha-D-ribose 1-phosphate = 2-deoxy-D-ribose 5-phosphate. It catalyses the reaction alpha-D-ribose 1-phosphate = D-ribose 5-phosphate. The protein operates within carbohydrate degradation; 2-deoxy-D-ribose 1-phosphate degradation; D-glyceraldehyde 3-phosphate and acetaldehyde from 2-deoxy-alpha-D-ribose 1-phosphate: step 1/2. In terms of biological role, isomerase that catalyzes the conversion of deoxy-ribose 1-phosphate (dRib-1-P) and ribose 1-phosphate (Rib-1-P) to deoxy-ribose 5-phosphate (dRib-5-P) and ribose 5-phosphate (Rib-5-P), respectively. This is Phosphopentomutase from Bacillus cereus (strain B4264).